We begin with the raw amino-acid sequence, 315 residues long: uncharacterized protein (315 aa).

The next 3 helical transmembrane spans lie at Ile-19 to Phe-39, Thr-56 to Phe-76, and Pro-81 to Ile-101. Residues Glu-154–Gln-171 show a composition bias toward polar residues. The disordered stretch occupies residues Glu-154–Asp-214. Over residues Gly-203–Asp-214 the composition is skewed to basic and acidic residues.

The protein belongs to the ATPase C chain family.

The protein resides in the mitochondrion membrane. This is an uncharacterized protein from Arabidopsis thaliana (Mouse-ear cress).